The chain runs to 77 residues: U8-lycotoxin-Ls1m (77 aa).

The signal sequence occupies residues 1–20; sequence MKLIIFTGLVLFSIVSLIEA. Positions 21-26 are excised as a propeptide; that stretch reads QAENEK.

The protein belongs to the neurotoxin 19 (CSTX) family. 08 (U8-Lctx) subfamily. In terms of processing, contains 4 disulfide bonds. In terms of tissue distribution, expressed by the venom gland.

The protein localises to the secreted. The sequence is that of U8-lycotoxin-Ls1m from Lycosa singoriensis (Wolf spider).